The following is a 231-amino-acid chain: Glycerol-3-phosphate acyltransferase (231 aa).

Transmembrane regions (helical) follow at residues 6–26, 55–75, 95–115, 130–150, 152–172, and 196–216; these read FLFLFLFFYILGSIPTGLVIG, WGILVFLLDFCKGFVPLTIFL, LTMKISLLAISPILGHMFSLF, IITSFNPLIGISGIIFFAIFL, LFGYASLSSIMASTLVNIFLW, and LFYFSINFATLIIIAKHYSNI.

This sequence belongs to the PlsY family. Probably interacts with PlsX.

The protein resides in the cell membrane. The catalysed reaction is an acyl phosphate + sn-glycerol 3-phosphate = a 1-acyl-sn-glycero-3-phosphate + phosphate. It functions in the pathway lipid metabolism; phospholipid metabolism. Its function is as follows. Catalyzes the transfer of an acyl group from acyl-phosphate (acyl-PO(4)) to glycerol-3-phosphate (G3P) to form lysophosphatidic acid (LPA). This enzyme utilizes acyl-phosphate as fatty acyl donor, but not acyl-CoA or acyl-ACP. The chain is Glycerol-3-phosphate acyltransferase from Aster yellows witches'-broom phytoplasma (strain AYWB).